The primary structure comprises 183 residues: Capsid protein (183 aa).

Residues 143–183 (LPENAVVRRRGRSPRRRTPSPRRRRSQSPRRRRSQSRGSQC) are disordered. Residues 149–177 (VRRRGRSPRRRTPSPRRRRSQSPRRRRSQ) are compositionally biased toward basic residues. Residues serine 155, serine 162, and serine 170 each carry the phosphoserine; by host modification. A 1; half-length repeat occupies 155–161 (SPRRRTP). Positions 155–177 (SPRRRTPSPRRRRSQSPRRRRSQ) are 3 X 8 AA repeats of S-P-R-R-R-[PR]-S-Q. Positions 158–175 (RRTPSPRRRRSQSPRRRR) match the Bipartite nuclear localization signal motif. 2 repeat units span residues 162-169 (SPRRRRSQ) and 170-177 (SPRRRRSQ). Residues 177 to 183 (QSRGSQC) form an RNA binding region.

The protein belongs to the orthohepadnavirus core antigen family. In terms of assembly, homodimerizes, then multimerizes. Interacts with cytosol exposed regions of viral L glycoprotein present in the reticulum-to-Golgi compartment. Interacts with human FLNB. Phosphorylated form interacts with host importin alpha; this interaction depends on the exposure of the NLS, which itself depends upon genome maturation and/or phosphorylation of the capsid protein. Interacts with host NUP153. Phosphorylated by host SRPK1, SRPK2, and maybe protein kinase C or GAPDH. Phosphorylation is critical for pregenomic RNA packaging. Protein kinase C phosphorylation is stimulated by HBx protein and may play a role in transport of the viral genome to the nucleus at the late step during the viral replication cycle.

It localises to the virion. The protein resides in the host cytoplasm. Functionally, self assembles to form an icosahedral capsid. Most capsids appear to be large particles with an icosahedral symmetry of T=4 and consist of 240 copies of capsid protein, though a fraction forms smaller T=3 particles consisting of 180 capsid proteins. Entering capsids are transported along microtubules to the nucleus. Phosphorylation of the capsid is thought to induce exposure of nuclear localization signal in the C-terminal portion of the capsid protein that allows binding to the nuclear pore complex via the importin (karyopherin-) alpha and beta. Capsids are imported in intact form through the nuclear pore into the nuclear basket, where it probably binds NUP153. Only capsids that contain the mature viral genome can release the viral DNA and capsid protein into the nucleoplasm. Immature capsids get stuck in the basket. Capsids encapsulate the pre-genomic RNA and the P protein. Pre-genomic RNA is reverse-transcribed into DNA while the capsid is still in the cytoplasm. The capsid can then either be directed to the nucleus, providing more genomes for transcription, or bud through the endoplasmic reticulum to provide new virions. The chain is Capsid protein from Homo sapiens (Human).